The primary structure comprises 255 residues: Taurine import ATP-binding protein TauB (255 aa).

In terms of domain architecture, ABC transporter spans 2 to 229 (LQISHLYADY…RFVAGESSRS (228 aa)). An ATP-binding site is contributed by 34 to 41 (GPSGCGKT).

This sequence belongs to the ABC transporter superfamily. Taurine importer (TC 3.A.1.17.1) family. As to quaternary structure, the complex is composed of two ATP-binding proteins (TauB), two transmembrane proteins (TauC) and a solute-binding protein (TauA).

The protein resides in the cell inner membrane. It carries out the reaction taurine(out) + ATP + H2O = taurine(in) + ADP + phosphate + H(+). In terms of biological role, part of the ABC transporter complex TauABC involved in taurine import. Responsible for energy coupling to the transport system. The sequence is that of Taurine import ATP-binding protein TauB from Escherichia coli (strain K12).